Reading from the N-terminus, the 281-residue chain is Pantothenate synthetase (281 aa).

30–37 (MGYLHEGH) contributes to the ATP binding site. His37 (proton donor) is an active-site residue. Gln61 contacts (R)-pantoate. Gln61 is a binding site for beta-alanine. 147-150 (GEKD) contributes to the ATP binding site. Gln153 is a binding site for (R)-pantoate. ATP contacts are provided by residues Ile176 and 184 to 187 (KSSR).

This sequence belongs to the pantothenate synthetase family. Homodimer.

The protein localises to the cytoplasm. It carries out the reaction (R)-pantoate + beta-alanine + ATP = (R)-pantothenate + AMP + diphosphate + H(+). It functions in the pathway cofactor biosynthesis; (R)-pantothenate biosynthesis; (R)-pantothenate from (R)-pantoate and beta-alanine: step 1/1. In terms of biological role, catalyzes the condensation of pantoate with beta-alanine in an ATP-dependent reaction via a pantoyl-adenylate intermediate. This is Pantothenate synthetase from Clostridium botulinum (strain 657 / Type Ba4).